The following is a 181-amino-acid chain: Peptidyl-prolyl cis-trans isomerase H (181 aa).

Residues F17–E180 form the PPIase cyclophilin-type domain.

Belongs to the cyclophilin-type PPIase family. PPIase H subfamily.

It is found in the nucleus. It catalyses the reaction [protein]-peptidylproline (omega=180) = [protein]-peptidylproline (omega=0). Its function is as follows. PPIases accelerate the folding of proteins. It catalyzes the cis-trans isomerization of proline imidic peptide bonds in oligopeptides. The chain is Peptidyl-prolyl cis-trans isomerase H (cyp3) from Aspergillus fumigatus (strain ATCC MYA-4609 / CBS 101355 / FGSC A1100 / Af293) (Neosartorya fumigata).